Consider the following 319-residue polypeptide: uncharacterized protein (319 aa).

Residues 1-23 (MFPFRRNVLAFAALLALSSPVLA) form the signal peptide.

This sequence to H.influenzae HI_0755.

This is an uncharacterized protein from Escherichia coli (strain K12).